A 521-amino-acid chain; its full sequence is Cytochrome P450 monooxygenase 105 (521 aa).

Residues 12 to 32 (GVASPATLAVAAVTFLTALVL) form a helical membrane-spanning segment. Residues Asn218, Asn274, and Asn317 are each glycosylated (N-linked (GlcNAc...) asparagine). Residue Cys449 participates in heme binding.

It belongs to the cytochrome P450 family. Heme is required as a cofactor.

The protein resides in the membrane. Its pathway is secondary metabolite biosynthesis. Its function is as follows. Cytochrome P450 monooxygenase that is able to use anthracene, carbazole, pyrene, phenanthrene and trans-stilbene as substrates for oxidation. These multifunctional properties against a series of polycyclic aromatic hydrocarbons (PAHs) suggest that CYP105 would play important roles, at least in part, in fungal metabolic systems involved in xenobiotic detoxification. The protein is Cytochrome P450 monooxygenase 105 of Postia placenta (strain ATCC 44394 / Madison 698-R) (Brown rot fungus).